Here is a 264-residue protein sequence, read N- to C-terminus: Orotidine 5'-phosphate decarboxylase (264 aa).

Substrate-binding positions include aspartate 37, 59–61 (KTH), 91–100 (DRKFADIGNT), tyrosine 217, and arginine 235. Lysine 93 acts as the Proton donor in catalysis.

The protein belongs to the OMP decarboxylase family.

It carries out the reaction orotidine 5'-phosphate + H(+) = UMP + CO2. Its pathway is pyrimidine metabolism; UMP biosynthesis via de novo pathway; UMP from orotate: step 2/2. This chain is Orotidine 5'-phosphate decarboxylase (URA3), found in Torulaspora delbrueckii (Yeast).